The primary structure comprises 62 residues: Potassium channel toxin alpha-KTx Tx773 (62 aa).

The signal sequence occupies residues 1–18 (MQKLFIVLLLFCILRLDA). Disulfide bonds link C28-C46, C33-C59, and C37-C61.

The protein belongs to the short scorpion toxin superfamily. Potassium channel inhibitor family. Alpha-KTx 23 subfamily. Expressed by the venom gland.

The protein resides in the secreted. Functionally, may block potassium channels. This is Potassium channel toxin alpha-KTx Tx773 from Buthus israelis (Israeli scorpion).